Reading from the N-terminus, the 421-residue chain is Enolase (421 aa).

Glutamine 162 is a binding site for (2R)-2-phosphoglycerate. Glutamate 204 acts as the Proton donor in catalysis. 3 residues coordinate Mg(2+): aspartate 241, glutamate 284, and aspartate 311. (2R)-2-phosphoglycerate-binding residues include lysine 336, arginine 365, serine 366, and lysine 387. Lysine 336 acts as the Proton acceptor in catalysis.

This sequence belongs to the enolase family. The cofactor is Mg(2+).

It is found in the cytoplasm. Its subcellular location is the secreted. It localises to the cell surface. It carries out the reaction (2R)-2-phosphoglycerate = phosphoenolpyruvate + H2O. It participates in carbohydrate degradation; glycolysis; pyruvate from D-glyceraldehyde 3-phosphate: step 4/5. Its function is as follows. Catalyzes the reversible conversion of 2-phosphoglycerate (2-PG) into phosphoenolpyruvate (PEP). It is essential for the degradation of carbohydrates via glycolysis. The protein is Enolase of Nitratiruptor sp. (strain SB155-2).